A 335-amino-acid chain; its full sequence is Pyruvate dehydrogenase E1 component subunit beta (335 aa).

E60 serves as a coordination point for thiamine diphosphate. K(+)-binding residues include A161, I162, and N166.

In terms of assembly, heterodimer of an alpha and a beta chain. Thiamine diphosphate serves as cofactor.

Its subcellular location is the plastid. The protein localises to the chloroplast. The catalysed reaction is N(6)-[(R)-lipoyl]-L-lysyl-[protein] + pyruvate + H(+) = N(6)-[(R)-S(8)-acetyldihydrolipoyl]-L-lysyl-[protein] + CO2. The pyruvate dehydrogenase complex catalyzes the overall conversion of pyruvate to acetyl-CoA and CO(2). It contains multiple copies of three enzymatic components: pyruvate dehydrogenase (E1), dihydrolipoamide acetyltransferase (E2) and lipoamide dehydrogenase (E3). The sequence is that of Pyruvate dehydrogenase E1 component subunit beta (pdhB) from Chlorokybus atmophyticus (Soil alga).